Consider the following 147-residue polypeptide: Protein OPG060 (147 aa).

This sequence belongs to the orthopoxvirus OPG058 family.

The chain is Protein OPG060 (OPG060) from Bos taurus (Bovine).